The following is a 312-amino-acid chain: Probable myosin light chain kinase DDB_G0282429 (312 aa).

Residues 1-28 (MDRMDSSDEEIDNISDDELQSGDEIEVE) are disordered. Acidic residues predominate over residues 7 to 27 (SDEEIDNISDDELQSGDEIEV). The Protein kinase domain occupies 38 to 290 (YILGNEIGRG…FEQCLIHPWV (253 aa)). Residues 44 to 52 (IGRGAFSIV) and lysine 67 each bind ATP. Aspartate 158 serves as the catalytic Proton acceptor.

Belongs to the protein kinase superfamily. CAMK Ser/Thr protein kinase family. CaMK subfamily.

The catalysed reaction is L-seryl-[myosin light chain] + ATP = O-phospho-L-seryl-[myosin light chain] + ADP + H(+). It catalyses the reaction L-threonyl-[myosin light chain] + ATP = O-phospho-L-threonyl-[myosin light chain] + ADP + H(+). Its activity is regulated as follows. Does not have a calmodulin-binding domain. In terms of biological role, may phosphorylate a specific serine in the N-terminus of a myosin light chain. This chain is Probable myosin light chain kinase DDB_G0282429, found in Dictyostelium discoideum (Social amoeba).